A 209-amino-acid chain; its full sequence is Chaperone protein TorD (209 aa).

The protein belongs to the TorD/DmsD family. TorD subfamily.

The protein localises to the cytoplasm. Functionally, involved in the biogenesis of TorA. Acts on TorA before the insertion of the molybdenum cofactor and, as a result, probably favors a conformation of the apoenzyme that is competent for acquiring the cofactor. The sequence is that of Chaperone protein TorD from Shewanella baltica (strain OS185).